The primary structure comprises 122 residues: Protein C10 (122 aa).

It belongs to the UPF0456 family.

Its subcellular location is the cytoplasm. This is Protein C10 from Danio rerio (Zebrafish).